The primary structure comprises 442 residues: Aspartate--tRNA(Asp/Asn) ligase (442 aa).

Position 172 (glutamate 172) interacts with L-aspartate. An aspartate region spans residues 194–197 (QFYK). Arginine 216 is an L-aspartate binding site. ATP contacts are provided by residues 216–218 (RAE), 224–226 (RHL), and glutamate 365. Positions 365 and 368 each coordinate Mg(2+). L-aspartate is bound by residues threonine 368 and arginine 372. 413 to 416 (GLER) serves as a coordination point for ATP.

This sequence belongs to the class-II aminoacyl-tRNA synthetase family. Type 2 subfamily. In terms of assembly, homodimer. Mg(2+) serves as cofactor.

The protein resides in the cytoplasm. The catalysed reaction is tRNA(Asx) + L-aspartate + ATP = L-aspartyl-tRNA(Asx) + AMP + diphosphate. Its function is as follows. Aspartyl-tRNA synthetase with relaxed tRNA specificity since it is able to aspartylate not only its cognate tRNA(Asp) but also tRNA(Asn). Reaction proceeds in two steps: L-aspartate is first activated by ATP to form Asp-AMP and then transferred to the acceptor end of tRNA(Asp/Asn). This chain is Aspartate--tRNA(Asp/Asn) ligase (aspS), found in Aeropyrum pernix (strain ATCC 700893 / DSM 11879 / JCM 9820 / NBRC 100138 / K1).